The primary structure comprises 337 residues: Probable RuBisCO transcriptional regulator (337 aa).

The 58-residue stretch at 6-63 (FTLDQLRILKAIAVEGSFKRAADSLYVSQPAVSLQVQNLERQLDVPLFDRGGRRAQLT) folds into the HTH lysR-type domain. A DNA-binding region (H-T-H motif) is located at residues 23-42 (FKRAADSLYVSQPAVSLQVQ).

It belongs to the LysR transcriptional regulatory family.

Functionally, trans-acting transcriptional regulator of RuBisCO genes (rbcL and rbcS) expression. The polypeptide is Probable RuBisCO transcriptional regulator (rbcR) (Trichormus variabilis (strain ATCC 29413 / PCC 7937) (Anabaena variabilis)).